The chain runs to 630 residues: DNA topoisomerase 4 subunit B (630 aa).

ATP contacts are provided by residues Y5, N42, D69, 110 to 116 (GLHGVGI), and K334. Positions 412–525 (TELFLVEGDS…NGHVYVALPP (114 aa)) constitute a Toprim domain. The Mg(2+) site is built by E418, D490, and D492.

Belongs to the type II topoisomerase family. ParE type 1 subfamily. Heterotetramer composed of ParC and ParE. The cofactor is Mg(2+). Requires Mn(2+) as cofactor. Ca(2+) is required as a cofactor.

The catalysed reaction is ATP-dependent breakage, passage and rejoining of double-stranded DNA.. In terms of biological role, topoisomerase IV is essential for chromosome segregation. It relaxes supercoiled DNA. Performs the decatenation events required during the replication of a circular DNA molecule. The chain is DNA topoisomerase 4 subunit B from Salmonella typhi.